A 1776-amino-acid chain; its full sequence is MHSVSPSTYPSGGTSPAPADTPGTEYSEYEFSNDVAVVGMACRVAGGNHNPELLWQSLLSQKSAVGEIPEMRWEPYYRRDPRNAKELKKTTSRGYFLDRLEDFDCQFFGISPKEAEQMDPQQRVSLEVASEALEDAGIPAKSLSGSDTAVFWGVNSDDYSKLVLEDLPNVEAWMGIGTAYCGVPNRISYHLNLMGPSTAVDAACASSLVAVHHGVQAIRLGESQVAIVGGVNALCGPGLTRVLDKAGAISSDGSCKSFDDDAHGYARGEGAGALVLKSLHRALLDHDNVLAVIKGSAVAQDGKTNGIMAPNAKAQQLAARTALNVAGVDPSTVRYVEAHATSTPLGDPTEISAIAGVYGTNRPADDPCYIGSIKPNIGHLEAGAGVMGFIKAILTIQKGVLPPQANLTNLNSRIDWKTAGVKVVQEATPWPSSDPIRRAGVCSYGYGGTVSHAVIEEFNPILRPDPLDDGAATGPGLLLLSGPQEKRLALQAKTLREWMTADGKDNNLSEILTTLATRRDHHDYRAALVVDDHLDATQVLQALANGTDHSFTTQSRVLGADVSKDVVWVFSGHGAQWPDMGKQLIHNPVFFAAIQPLDELIQAEIGLSPIELLRTGDFESSDRVQILTYLMQIGLSAILQSNGITPQAVIGHSVGEIAASVVAGALTSAEGALIVTRRALLYRQVMGKGGMILVNLPSAETEEILGRRQDLVVAIDSSPSSCVVAGDKDIVAETAEAFKARGVKTFTVKSDIAFHSPTLNVLMDPLRDALGQALAPTVHIKLYSTALVDPRGQDVRDLEYWTGNMVNRVRLTSAIQAAVEDGYRLFLEVSTHPVVSHSINETLMDAGLEDFAVIPTLLRKKPTEKHILHSIAQLHCRGAEVNWAAQMPGRWATGLPTTTWMHKPIWRKIETAPLHTGLTHDVEKHTLLGQRIPVPGTDTFVYTSRLDNETKPFPGSHPLHGTEIVPAAGLINTFLKGTGGQMLQNVVLRVPVAINAPRSVQVVVQQDQVKVVSRLISSDPSLSDDDASWVTHTTAYWDRKVLGSADRIDLAAVKARLTTKLADNFSIDYLDKVGVSAMGFPWAVTEHYRDTKQMLARVDVNPAVLGDDPLPWDSSSWAPVLDAATSVGSTVFQTAALRMPAQIERVEIFTSEDPPKISYLFVEEASDSVPTSHVSVLSETGEVLAKFTAMRFSEIEGTPGVSGSMESLVHQIAWPPATPAEEPLLITKVILVSPDATARAQYAATLPTQVQSFQFSTTEDFFSNASSLPLEKGTVVAYIPGEVASLAEVPAASESFTWNLLELIKFIVNGSLPIKVFTLTSSVGDGQTPTALAQSPLIGLARIIASEHPDLGSLIDIEEPKIPLSTMRYIQGADVIRISDGIARVSRFRSLPRTKLRPASEGPRLLPRPDGTYLITGGLGILGLEVADFLVEKGARRLLLISRRALPPRRTWDQVSEDLQPTIAKIRLLESRGASVHVLPLDITKPDAVEQLSTALDRLSLPAVQGVVHAAGVLDNEMVLQTTRDAFNRVLAPKIAGALALHEVFPPKSVDFFVMFSSCGNLVGFTGQASYGSGNAFLDTLATHRARLGDSGAVAFQWTAWRGLGMGSSTDFINAELEAKGITDVTRDEAFAAWQHLAKYDIDHGVVLRSLAIDDGEPVPVPILNDIVVRRVSELSGSAQAAAGSSGNDAVPSSGPELKAYLDEKIRGCVAKVLQMTAEDVDSKAALADLGVDSVMTVTLRRQLQQTLKIPVPPTLTWSHPTVSHLVVWFAEKIGK.

Residues 1–18 (MHSVSPSTYPSGGTSPAP) show a composition bias toward low complexity. Residues 1–26 (MHSVSPSTYPSGGTSPAPADTPGTEY) are disordered. Residues 32 to 457 (SNDVAVVGMA…GTVSHAVIEE (426 aa)) enclose the Ketosynthase family 3 (KS3) domain. Catalysis depends on for beta-ketoacyl synthase activity residues C204, H339, and H379. Residues 567–880 (VWVFSGHGAQ…IAQLHCRGAE (314 aa)) form a malonyl-CoA:ACP transacylase (MAT) domain region. The segment at 925-1044 (HTLLGQRIPV…AYWDRKVLGS (120 aa)) is N-terminal hotdog fold. A dehydratase (DH) domain region spans residues 925-1196 (HTLLGQRIPV…FTAMRFSEIE (272 aa)). Positions 925-1201 (HTLLGQRIPV…FSEIEGTPGV (277 aa)) constitute a PKS/mFAS DH domain. H957 acts as the Proton acceptor; for dehydratase activity in catalysis. A C-terminal hotdog fold region spans residues 1058–1201 (TTKLADNFSI…FSEIEGTPGV (144 aa)). D1113 (proton donor; for dehydratase activity) is an active-site residue. Residues 1205–1657 (MESLVHQIAW…LRSLAIDDGE (453 aa)) form a product template (PT) domain region. In terms of domain architecture, Carrier spans 1700 to 1774 (AYLDEKIRGC…HLVVWFAEKI (75 aa)). Position 1734 is an O-(pantetheine 4'-phosphoryl)serine (S1734).

The protein resides in the cytoplasm. It localises to the cytosol. The catalysed reaction is 3 malonyl-CoA + acetyl-CoA + NADPH + 3 H(+) = 6-methylsalicylate + 3 CO2 + NADP(+) + 4 CoA + H2O. The protein operates within mycotoxin biosynthesis; patulin biosynthesis. Its function is as follows. 6-methylsalicylic acid synthase; part of the gene cluster that mediates the biosynthesis of patulin, an acetate-derived tetraketide mycotoxin produced by several fungal species that shows antimicrobial properties against several bacteria. PatK catalyzes the first step of the pathway which is the synthesis of 6-methylsalicylic acid via condensation of 1 acetate and 3 malonate units. The pathway begins with the synthesis of 6-methylsalicylic acid by the polyketide synthase (PKS) patK via condensation of acetate and malonate units. The 6-methylsalicylic acid decarboxylase patG then catalyzes the decarboxylation of 6-methylsalicylic acid to yield m-cresol (also known as 3-methylphenol). These first reactions occur in the cytosol. The intermediate m-cresol is then transported into the endoplasmic reticulum where the cytochrome P450 monooxygenase patH converts it to m-hydroxybenzyl alcohol, which is further converted to gentisyl alcohol by the cytochrome P450 monooxygenase patI. The oxidoreductases patJ and patO further convert gentisyl alcohol to isoepoxydon in the vacuole. PatN catalyzes then the transformation of isoepoxydon into phyllostine. The cluster protein patF is responsible for the conversion from phyllostine to neopatulin whereas the alcohol dehydrogenase patD converts neopatulin to E-ascladiol. The steps between isoepoxydon and E-ascladiol occur in the cytosol, and E-ascladiol is probably secreted to the extracellular space by one of the cluster-specific transporters patC or patM. Finally, the secreted patulin synthase patE catalyzes the conversion of E-ascladiol to patulin. The polypeptide is 6-methylsalicylic acid synthase (Penicillium expansum (Blue mold rot fungus)).